The following is a 120-amino-acid chain: MADARKLLGRMGEEAAARYLEKKGCRILSRNHCCRLGELDLVVSDGDVLVFVEVRARTGEEYGLAQESITGRKKSRLRLLAWQYLKEKGKTGSMCRFDVIAVLFDREGRVKRLEHFENAF.

This sequence belongs to the UPF0102 family.

In Pelotomaculum thermopropionicum (strain DSM 13744 / JCM 10971 / SI), this protein is UPF0102 protein PTH_1707.